Consider the following 821-residue polypeptide: Elongator complex protein 2 (821 aa).

13 WD repeats span residues 56-100 (GHTA…VLKS), 105-152 (GHEG…VKCL), 160-200 (GFVL…FQKM), 205-246 (GHED…TSLE), 280-328 (GHEN…GVWL), 338-377 (GNTLGFYGCQFGENGSMIIAHAFHGAMHLWKQSTVNPRQW), 385-424 (GHFDGVQDLIWDPEGEFIITTSTDQTTRLFAPWKKKNQSQ), 435-473 (IHGYNLKCLAMIDRFQFVSGADEKVLRVFSAPRNFVENF), 563-607 (GHGY…QVQS), 610-649 (YHTLTVTQMAFSPDDKFLLAVSRDRTWSLWKRQDVTSAEF), 665-704 (VHSRIIWSCDWSPDSKYFFTGSRDKKVVVWGECNSSYNPM), 716-760 (DVGS…QETK), and 773-821 (SHTL…RCAL).

Belongs to the WD repeat ELP2 family. Component of the elongator complex which consists of ELP1, ELP2, ELP3, ELP4, ELP5 and ELP6. Interacts with STAT3 and JAKs.

The protein resides in the cytoplasm. It localises to the nucleus. It participates in tRNA modification; 5-methoxycarbonylmethyl-2-thiouridine-tRNA biosynthesis. Its function is as follows. Component of the elongator complex which is required for multiple tRNA modifications, including mcm5U (5-methoxycarbonylmethyl uridine), mcm5s2U (5-methoxycarbonylmethyl-2-thiouridine), and ncm5U (5-carbamoylmethyl uridine). The elongator complex catalyzes the formation of carboxymethyluridine in the wobble base at position 34 in tRNAs. This is Elongator complex protein 2 (Elp2) from Rattus norvegicus (Rat).